A 227-amino-acid chain; its full sequence is Ubiquitin-conjugating enzyme E2 6 (227 aa).

Over 1 to 206 the chain is Cytoplasmic; the sequence is MASKGAYKRL…NSKQSWVKSR (206 aa). The UBC core domain maps to 5-163; sequence GAYKRLMKEY…FPELIDKNRE (159 aa). Catalysis depends on C87, which acts as the Glycyl thioester intermediate. The chain crosses the membrane as a helical span at residues 207 to 225; that stretch reads WSIAVLVFFALALARFFGA.

The protein belongs to the ubiquitin-conjugating enzyme family.

Its subcellular location is the endoplasmic reticulum membrane. It catalyses the reaction S-ubiquitinyl-[E1 ubiquitin-activating enzyme]-L-cysteine + [E2 ubiquitin-conjugating enzyme]-L-cysteine = [E1 ubiquitin-activating enzyme]-L-cysteine + S-ubiquitinyl-[E2 ubiquitin-conjugating enzyme]-L-cysteine.. The protein operates within protein modification; protein ubiquitination. Functionally, catalyzes the covalent attachment of ubiquitin to other proteins. Functions in degradation of misfolded or regulated proteins localized in the endoplasmic reticulum (ER) lumen or membrane via the ubiquitin-proteasome system. Cognate E2 conjugating enzyme for the doa10 ubiquitin ligase complex, which is part of the ERAD-C pathway responsible for the rapid degradation of membrane proteins with misfolded cytoplasmic domains. The polypeptide is Ubiquitin-conjugating enzyme E2 6 (ubc6) (Schizosaccharomyces pombe (strain 972 / ATCC 24843) (Fission yeast)).